The following is a 213-amino-acid chain: Probable transaldolase (213 aa).

Lysine 83 serves as the catalytic Schiff-base intermediate with substrate.

It belongs to the transaldolase family. Type 3B subfamily.

It localises to the cytoplasm. The enzyme catalyses D-sedoheptulose 7-phosphate + D-glyceraldehyde 3-phosphate = D-erythrose 4-phosphate + beta-D-fructose 6-phosphate. It participates in carbohydrate degradation; pentose phosphate pathway; D-glyceraldehyde 3-phosphate and beta-D-fructose 6-phosphate from D-ribose 5-phosphate and D-xylulose 5-phosphate (non-oxidative stage): step 2/3. In terms of biological role, transaldolase is important for the balance of metabolites in the pentose-phosphate pathway. The chain is Probable transaldolase from Geobacillus sp. (strain WCH70).